We begin with the raw amino-acid sequence, 334 residues long: Syntaxin-18 (334 aa).

Topologically, residues 1 to 308 are cytoplasmic; the sequence is MAVDITLLFR…EDIREAIKNN (308 aa). 2 disordered regions span residues 29-50 and 166-225; these read GGAD…GDFS and LSKL…GEDE. Basic and acidic residues-rich tracts occupy residues 33–50, 166–186, and 193–207; these read GSRD…GDFS, LSKL…EKSS, and SEEK…EKPL. The t-SNARE coiled-coil homology domain occupies 242–304; that stretch reads IGEMNSLFDE…KEGNEDIREA (63 aa). Residues 309–329 traverse the membrane as a helical; Anchor for type IV membrane protein segment; it reads AGFRVWILFFLVMCSFSLLFL. The Vesicular segment spans residues 330–334; sequence DWYDS.

This sequence belongs to the syntaxin family. Component of a SNARE complex consisting of STX18, USE1L, BNIP1/SEC20L, and SEC22B. RINT1/TIP20L and ZW10 are associated with the complex through interaction with BNIP1/SEC20L. Interacts directly with USE1L and BNIP1/SEC20L.

It is found in the endoplasmic reticulum membrane. Its subcellular location is the golgi apparatus membrane. Functionally, syntaxin that may be involved in targeting and fusion of Golgi-derived retrograde transport vesicles with the ER. The protein is Syntaxin-18 (Stx18) of Rattus norvegicus (Rat).